Reading from the N-terminus, the 262-residue chain is Acyl-[acyl-carrier-protein]--UDP-N-acetylglucosamine O-acyltransferase (262 aa).

It belongs to the transferase hexapeptide repeat family. LpxA subfamily. Homotrimer.

It localises to the cytoplasm. It carries out the reaction a (3R)-hydroxyacyl-[ACP] + UDP-N-acetyl-alpha-D-glucosamine = a UDP-3-O-[(3R)-3-hydroxyacyl]-N-acetyl-alpha-D-glucosamine + holo-[ACP]. The protein operates within glycolipid biosynthesis; lipid IV(A) biosynthesis; lipid IV(A) from (3R)-3-hydroxytetradecanoyl-[acyl-carrier-protein] and UDP-N-acetyl-alpha-D-glucosamine: step 1/6. Functionally, involved in the biosynthesis of lipid A, a phosphorylated glycolipid that anchors the lipopolysaccharide to the outer membrane of the cell. The chain is Acyl-[acyl-carrier-protein]--UDP-N-acetylglucosamine O-acyltransferase from Photorhabdus laumondii subsp. laumondii (strain DSM 15139 / CIP 105565 / TT01) (Photorhabdus luminescens subsp. laumondii).